A 389-amino-acid chain; its full sequence is Putative sugar efflux transporter DR_1322 (389 aa).

A run of 12 helical transmembrane segments spans residues 10–30 (AVLL…LFAV), 34–54 (GMTP…AVLV), 69–89 (KPLV…LSGV), 96–116 (MATG…VFAF), 135–155 (VLRA…AAVL), 161–181 (SGVF…LLFI), 211–231 (GWVV…MVMF), 246–266 (VGFL…LFVL), 281–301 (LLLF…PLLI), 308–328 (AAVL…LMPG), 341–361 (SVVG…VFGY), and 363–383 (PVFL…LWAT).

Belongs to the major facilitator superfamily. Set transporter family.

It localises to the cell membrane. Involved in the efflux of sugars. The physiological role may be the detoxification of non-metabolizable sugar analogs. This chain is Putative sugar efflux transporter DR_1322, found in Deinococcus radiodurans (strain ATCC 13939 / DSM 20539 / JCM 16871 / CCUG 27074 / LMG 4051 / NBRC 15346 / NCIMB 9279 / VKM B-1422 / R1).